Reading from the N-terminus, the 136-residue chain is UPF0216 protein PF0452 (136 aa).

This sequence belongs to the UPF0216 family.

The sequence is that of UPF0216 protein PF0452 from Pyrococcus furiosus (strain ATCC 43587 / DSM 3638 / JCM 8422 / Vc1).